Consider the following 262-residue polypeptide: Ankyrin repeat domain-containing protein 7 (262 aa).

5 ANK repeats span residues 67–96 (KYRT…KINI), 100–129 (ENKS…DPNL), 133–162 (RYNT…DLEA), 166–195 (DGYT…DVNA), and 199–228 (YQRT…ELSC).

This chain is Ankyrin repeat domain-containing protein 7 (ANKRD7), found in Macaca fascicularis (Crab-eating macaque).